Here is a 332-residue protein sequence, read N- to C-terminus: Holliday junction branch migration complex subunit RuvB (332 aa).

The interval 1–181 is large ATPase domain (RuvB-L); the sequence is MARILDNNVM…FGITGHMEYY (181 aa). ATP contacts are provided by residues leucine 20, arginine 21, glycine 62, lysine 65, threonine 66, threonine 67, 128 to 130, arginine 171, tyrosine 181, and arginine 218; that span reads EDF. Threonine 66 is a Mg(2+) binding site. Positions 182-252 are small ATPAse domain (RuvB-S); sequence QEKDLTEIVE…ITDRALTMLD (71 aa). The head domain (RuvB-H) stretch occupies residues 255 to 332; the sequence is REGLNYIDQK…RHLGYPYQNT (78 aa). The DNA site is built by arginine 291, arginine 310, arginine 312, and arginine 315.

It belongs to the RuvB family. Homohexamer. Forms an RuvA(8)-RuvB(12)-Holliday junction (HJ) complex. HJ DNA is sandwiched between 2 RuvA tetramers; dsDNA enters through RuvA and exits via RuvB. An RuvB hexamer assembles on each DNA strand where it exits the tetramer. Each RuvB hexamer is contacted by two RuvA subunits (via domain III) on 2 adjacent RuvB subunits; this complex drives branch migration. In the full resolvosome a probable DNA-RuvA(4)-RuvB(12)-RuvC(2) complex forms which resolves the HJ.

The protein localises to the cytoplasm. It carries out the reaction ATP + H2O = ADP + phosphate + H(+). Its function is as follows. The RuvA-RuvB-RuvC complex processes Holliday junction (HJ) DNA during genetic recombination and DNA repair, while the RuvA-RuvB complex plays an important role in the rescue of blocked DNA replication forks via replication fork reversal (RFR). RuvA specifically binds to HJ cruciform DNA, conferring on it an open structure. The RuvB hexamer acts as an ATP-dependent pump, pulling dsDNA into and through the RuvAB complex. RuvB forms 2 homohexamers on either side of HJ DNA bound by 1 or 2 RuvA tetramers; 4 subunits per hexamer contact DNA at a time. Coordinated motions by a converter formed by DNA-disengaged RuvB subunits stimulates ATP hydrolysis and nucleotide exchange. Immobilization of the converter enables RuvB to convert the ATP-contained energy into a lever motion, pulling 2 nucleotides of DNA out of the RuvA tetramer per ATP hydrolyzed, thus driving DNA branch migration. The RuvB motors rotate together with the DNA substrate, which together with the progressing nucleotide cycle form the mechanistic basis for DNA recombination by continuous HJ branch migration. Branch migration allows RuvC to scan DNA until it finds its consensus sequence, where it cleaves and resolves cruciform DNA. The chain is Holliday junction branch migration complex subunit RuvB from Streptococcus pyogenes serotype M18 (strain MGAS8232).